The sequence spans 777 residues: MTNNITPIHEYKKYWAECFGTAPFLPTSRKEMDALGWDSCDIIIVTGDAYVDHPSFGMAIIGRLLEAQGFRVGIIAQPEWQNKNAFMQLGKPNLFFGITAGNMDSMINRYTADKKLRHDDAYTPNNEGGKRPDRATLVYSQRCREAYKEVPIVLGGIEASLRRVAHYDYWSDKVRRSVLFDAKADILLFGNAERALVEVAHRIANGEDISTMTNIRGTAVNLPAAPEGYTVIDSSRIEKPRKEAFVPKNPYEVETQCETKKDEPVAQPITIRPSRHDAATTAVRLPSFEKLRNDRILYAHASRVLHLETNPYSGRALLQSHGDRELWVNQAPIPLTTEEMDFVFGLPYARVPHPMYGKAKIPAYDMIKTSVNIMRGCFGGCSFCSITEHEGRIIQNRSKESIINEIEEIRDKVPGFTGTISDLGGPTANMYRLGCKDPKAEANCRRPSCVFPGICNKLNTDHKHTIDLYREARKVEGVKKVMVASGVRYDLAIESPEYVKELVTHHVGGYLKIAPEHTEKGPLDLMMKPGMGTYDRFKEMFEKYSAEAGKKQYLIPYFISAHPGTEDEDMLNLALWLKKNNFECDQVQNFYPSPMCNATSMYYSETNPLKRVKYKQREDIPVAKGERQRRLHKALLRYHDPANWPLIREALINMGKKHLIGDKPTCLVPAEDIDAQTPAQRRKSGRHGANRFATKHTKNQPGFGGHLNKRAEGGSKDGKPSGNRNGSGKVQGGQRPASNGQRPSGNGANRPAGSKPQGQGRPQGQGKPAGQRKPKRR.

A Radical SAM core domain is found at 363 to 642 (AYDMIKTSVN…KALLRYHDPA (280 aa)). Residues Cys377, Cys381, and Cys384 each coordinate [4Fe-4S] cluster. The segment at 675 to 777 (AQTPAQRRKS…PAGQRKPKRR (103 aa)) is disordered. Residues 680-698 (QRRKSGRHGANRFATKHTK) are compositionally biased toward basic residues. The span at 709-719 (KRAEGGSKDGK) shows a compositional bias: basic and acidic residues. Over residues 736–747 (PASNGQRPSGNG) the composition is skewed to polar residues. The span at 755–769 (KPQGQGRPQGQGKPA) shows a compositional bias: low complexity.

Belongs to the UPF0313 family. Requires [4Fe-4S] cluster as cofactor.

The sequence is that of UPF0313 protein VP1980 from Vibrio parahaemolyticus serotype O3:K6 (strain RIMD 2210633).